Here is a 752-residue protein sequence, read N- to C-terminus: Multifunctional tryptophan biosynthesis protein (752 aa).

The 200-residue stretch at 3 to 202 (FTLLIDNYDS…IQMKGGKWGG (200 aa)) folds into the Glutamine amidotransferase type-1 domain. Residue 58–60 (GPG) coordinates L-glutamine. The active-site Nucleophile; for GATase activity is Cys-86. 136–137 (SL) serves as a coordination point for L-glutamine. Residues His-176 and Glu-178 each act as for GATase activity in the active site. The interval 231–495 (ILNRIHAQRL…DTKAFLRSLI (265 aa)) is indole-3-glycerol phosphate synthase. The segment at 509 to 752 (LVKICGIRST…VEAFVKAVRG (244 aa)) is N-(5'-phosphoribosyl)anthranilate isomerase.

The catalysed reaction is N-(5-phospho-beta-D-ribosyl)anthranilate = 1-(2-carboxyphenylamino)-1-deoxy-D-ribulose 5-phosphate. It catalyses the reaction 1-(2-carboxyphenylamino)-1-deoxy-D-ribulose 5-phosphate + H(+) = (1S,2R)-1-C-(indol-3-yl)glycerol 3-phosphate + CO2 + H2O. The enzyme catalyses chorismate + L-glutamine = anthranilate + pyruvate + L-glutamate + H(+). It participates in amino-acid biosynthesis; L-tryptophan biosynthesis; L-tryptophan from chorismate: step 1/5. Its pathway is amino-acid biosynthesis; L-tryptophan biosynthesis; L-tryptophan from chorismate: step 3/5. It functions in the pathway amino-acid biosynthesis; L-tryptophan biosynthesis; L-tryptophan from chorismate: step 4/5. Its function is as follows. Trifunctional enzyme bearing the Gln amidotransferase (GATase) domain of anthranilate synthase, indole-glycerolphosphate synthase, and phosphoribosylanthranilate isomerase activities. In Cryptococcus neoformans var. neoformans serotype D (strain B-3501A) (Filobasidiella neoformans), this protein is Multifunctional tryptophan biosynthesis protein (TRP1).